Consider the following 508-residue polypeptide: tRNA(Ile2) 2-agmatinylcytidine synthetase TiaS (508 aa).

The OB DNA-binding region spans 367 to 427 (ITGGHVLIEL…YQLNIEKINV (61 aa)).

It belongs to the TiaS family.

The protein localises to the cytoplasm. It carries out the reaction cytidine(34) in tRNA(Ile2) + agmatine + ATP + H2O = 2-agmatinylcytidine(34) in tRNA(Ile2) + AMP + 2 phosphate + 2 H(+). ATP-dependent agmatine transferase that catalyzes the formation of 2-agmatinylcytidine (agm2C) at the wobble position (C34) of tRNA(Ile2), converting the codon specificity from AUG to AUA. The polypeptide is tRNA(Ile2) 2-agmatinylcytidine synthetase TiaS (Methanococcus voltae (strain ATCC BAA-1334 / A3)).